The following is a 123-amino-acid chain: Large ribosomal subunit protein bL12 (123 aa).

It belongs to the bacterial ribosomal protein bL12 family. Homodimer. Part of the ribosomal stalk of the 50S ribosomal subunit. Forms a multimeric L10(L12)X complex, where L10 forms an elongated spine to which 2 to 4 L12 dimers bind in a sequential fashion. Binds GTP-bound translation factors.

Functionally, forms part of the ribosomal stalk which helps the ribosome interact with GTP-bound translation factors. Is thus essential for accurate translation. The chain is Large ribosomal subunit protein bL12 from Dehalococcoides mccartyi (strain ATCC BAA-2100 / JCM 16839 / KCTC 5957 / BAV1).